An 89-amino-acid polypeptide reads, in one-letter code: Chromosomal protein MC1a (89 aa).

Its function is as follows. Protects DNA against thermal denaturation and modulates transcription. This is Chromosomal protein MC1a from Methanothrix soehngenii (Methanosaeta concilii).